The primary structure comprises 308 residues: UDP-N-acetylenolpyruvoylglucosamine reductase (308 aa).

One can recognise an FAD-binding PCMH-type domain in the interval 35 to 200; it reads RVGGPAQVLF…TSARFRGEPM (166 aa). The active site involves R180. Residues 211 to 226 are compositionally biased toward basic and acidic residues; the sequence is EVQRHRETAQPVREKT. The segment at 211–236 is disordered; sequence EVQRHRETAQPVREKTGGSTFKNPPG. Catalysis depends on S229, which acts as the Proton donor. E299 is an active-site residue.

Belongs to the MurB family. FAD serves as cofactor.

Its subcellular location is the cytoplasm. It carries out the reaction UDP-N-acetyl-alpha-D-muramate + NADP(+) = UDP-N-acetyl-3-O-(1-carboxyvinyl)-alpha-D-glucosamine + NADPH + H(+). The protein operates within cell wall biogenesis; peptidoglycan biosynthesis. Functionally, cell wall formation. This Rhodopseudomonas palustris (strain BisB18) protein is UDP-N-acetylenolpyruvoylglucosamine reductase.